Consider the following 146-residue polypeptide: 3-dehydroquinate dehydratase (146 aa).

Residue Y24 is the Proton acceptor of the active site. N73, H79, and D86 together coordinate substrate. Residue H99 is the Proton donor of the active site. Substrate-binding positions include 100–101 (LS) and R110.

It belongs to the type-II 3-dehydroquinase family. Homododecamer.

It catalyses the reaction 3-dehydroquinate = 3-dehydroshikimate + H2O. Its pathway is metabolic intermediate biosynthesis; chorismate biosynthesis; chorismate from D-erythrose 4-phosphate and phosphoenolpyruvate: step 3/7. Catalyzes a trans-dehydration via an enolate intermediate. In Shewanella baltica (strain OS195), this protein is 3-dehydroquinate dehydratase.